A 38-amino-acid polypeptide reads, in one-letter code: Large ribosomal subunit protein bL36 (38 aa).

It belongs to the bacterial ribosomal protein bL36 family.

This chain is Large ribosomal subunit protein bL36, found in Mycoplasma mobile (strain ATCC 43663 / 163K / NCTC 11711) (Mesomycoplasma mobile).